A 203-amino-acid chain; its full sequence is Ras-related protein Rab-30 (203 aa).

Val20, Gly21, Lys22, Thr23, Cys24, and Thr41 together coordinate GTP. Mg(2+) is bound at residue Thr23. The switch-I stretch occupies residues 36-44; it reads PGQGATIGV. Mg(2+) contacts are provided by Thr41 and Asp64. The GTP site is built by Gly67, Asn122, Lys123, Asp125, Ala153, and Lys154. A switch-II region spans residues 67-83; that stretch reads GQERFRSITQSYYRSAN. 2 S-geranylgeranyl cysteine lipidation sites follow: Cys199 and Cys200. Cys200 carries the post-translational modification Cysteine methyl ester. Positions 201–203 are cleaved as a propeptide — removed in mature form; the sequence is NFN.

Belongs to the small GTPase superfamily. Rab family. It depends on Mg(2+) as a cofactor.

The protein localises to the membrane. It is found in the golgi apparatus. It localises to the trans-Golgi network membrane. The protein resides in the cis-Golgi network membrane. Its subcellular location is the golgi apparatus membrane. The protein localises to the cytoplasm. It is found in the cytoplasmic vesicle. It localises to the autophagosome membrane. The protein resides in the autolysosome membrane. The catalysed reaction is GTP + H2O = GDP + phosphate + H(+). Regulated by guanine nucleotide exchange factors (GEFs) which promote the exchange of bound GDP for free GTP. Regulated by GTPase activating proteins (GAPs) which increase the GTP hydrolysis activity. Inhibited by GDP dissociation inhibitors (GDIs). The small GTPases Rab are key regulators of intracellular membrane trafficking, from the formation of transport vesicles to their fusion with membranes. Rabs cycle between an inactive GDP-bound form and an active GTP-bound form that is able to recruit to membranes different sets of downstream effectors directly responsible for vesicle formation, movement, tethering and fusion. RAB30 is required for maintaining the structural integrity of the Golgi apparatus, possibly by mediating interactions with cytoplasmic scaffolding proteins. Facilitates lipid homeostasis during fasting by regulating hepatic protein and lipid trafficking in a PPAR-alpha-dependent manner. Promotes autophagosome biogenesis during bacterial infection such as group A Streptococcus infection. This chain is Ras-related protein Rab-30 (RAB30), found in Bos taurus (Bovine).